The sequence spans 326 residues: GTP 3',8-cyclase (326 aa).

The Radical SAM core domain maps to 7–232; sequence GFGRSFPYLR…PRAADAGPAR (226 aa). Arg-16 is a binding site for GTP. Residues Cys-23 and Cys-27 each contribute to the [4Fe-4S] cluster site. Tyr-29 serves as a coordination point for S-adenosyl-L-methionine. A [4Fe-4S] cluster-binding site is contributed by Cys-30. Arg-65 is a binding site for GTP. Gly-69 is a binding site for S-adenosyl-L-methionine. Residue Thr-96 participates in GTP binding. Ser-120 contributes to the S-adenosyl-L-methionine binding site. GTP is bound at residue Lys-157. S-adenosyl-L-methionine is bound at residue Met-191. Cys-254 and Cys-257 together coordinate [4Fe-4S] cluster. Residue 259-261 participates in GTP binding; that stretch reads RLR. Cys-271 serves as a coordination point for [4Fe-4S] cluster.

Belongs to the radical SAM superfamily. MoaA family. Monomer and homodimer. Requires [4Fe-4S] cluster as cofactor.

The enzyme catalyses GTP + AH2 + S-adenosyl-L-methionine = (8S)-3',8-cyclo-7,8-dihydroguanosine 5'-triphosphate + 5'-deoxyadenosine + L-methionine + A + H(+). Its pathway is cofactor biosynthesis; molybdopterin biosynthesis. In terms of biological role, catalyzes the cyclization of GTP to (8S)-3',8-cyclo-7,8-dihydroguanosine 5'-triphosphate. This Stenotrophomonas maltophilia (strain K279a) protein is GTP 3',8-cyclase.